A 305-amino-acid polypeptide reads, in one-letter code: NAD kinase (305 aa).

The Proton acceptor role is filled by aspartate 88. Residues 88-89, arginine 93, 162-163, lysine 173, asparagine 192, 203-208, and glutamine 262 each bind NAD(+); these read DG, NE, and TAYSFS.

It belongs to the NAD kinase family. A divalent metal cation serves as cofactor.

The protein resides in the cytoplasm. The catalysed reaction is NAD(+) + ATP = ADP + NADP(+) + H(+). In terms of biological role, involved in the regulation of the intracellular balance of NAD and NADP, and is a key enzyme in the biosynthesis of NADP. Catalyzes specifically the phosphorylation on 2'-hydroxyl of the adenosine moiety of NAD to yield NADP. This chain is NAD kinase, found in Tropheryma whipplei (strain TW08/27) (Whipple's bacillus).